The following is a 119-amino-acid chain: Integration host factor subunit beta (119 aa).

The segment at 93–119 (AGGLADTQPDGDAPDQPQPTLLGLHAM) is disordered. Residues 97–112 (ADTQPDGDAPDQPQPT) are compositionally biased toward low complexity.

It belongs to the bacterial histone-like protein family. In terms of assembly, heterodimer of an alpha and a beta chain.

This protein is one of the two subunits of integration host factor, a specific DNA-binding protein that functions in genetic recombination as well as in transcriptional and translational control. The chain is Integration host factor subunit beta from Bordetella petrii (strain ATCC BAA-461 / DSM 12804 / CCUG 43448).